Consider the following 332-residue polypeptide: Fructose-1,6-bisphosphatase class 1 (332 aa).

Mg(2+)-binding residues include Glu93, Asp113, Leu115, and Asp116. Residues 116–119 (DGSS), Asn209, Tyr235, and Lys272 contribute to the substrate site. Residue Glu278 coordinates Mg(2+).

This sequence belongs to the FBPase class 1 family. As to quaternary structure, homotetramer. The cofactor is Mg(2+).

Its subcellular location is the cytoplasm. The catalysed reaction is beta-D-fructose 1,6-bisphosphate + H2O = beta-D-fructose 6-phosphate + phosphate. The protein operates within carbohydrate biosynthesis; gluconeogenesis. This Syntrophus aciditrophicus (strain SB) protein is Fructose-1,6-bisphosphatase class 1.